We begin with the raw amino-acid sequence, 66 residues long: Small ribosomal subunit protein eS27 (66 aa).

Residues cysteine 21, cysteine 24, cysteine 40, and cysteine 43 each coordinate Zn(2+). The C4-type zinc-finger motif lies at 21–43; sequence CPVCGNEQVIFSHATFPARCLVC.

The protein belongs to the eukaryotic ribosomal protein eS27 family. As to quaternary structure, part of the 30S ribosomal subunit. It depends on Zn(2+) as a cofactor.

In Hyperthermus butylicus (strain DSM 5456 / JCM 9403 / PLM1-5), this protein is Small ribosomal subunit protein eS27.